The chain runs to 166 residues: Large ribosomal subunit protein uL10 (166 aa).

The protein belongs to the universal ribosomal protein uL10 family. As to quaternary structure, part of the ribosomal stalk of the 50S ribosomal subunit. The N-terminus interacts with L11 and the large rRNA to form the base of the stalk. The C-terminus forms an elongated spine to which L12 dimers bind in a sequential fashion forming a multimeric L10(L12)X complex.

Functionally, forms part of the ribosomal stalk, playing a central role in the interaction of the ribosome with GTP-bound translation factors. The protein is Large ribosomal subunit protein uL10 of Flavobacterium psychrophilum (strain ATCC 49511 / DSM 21280 / CIP 103535 / JIP02/86).